Reading from the N-terminus, the 467-residue chain is uncharacterized protein (467 aa).

Residues 1–60 (MVRVSRGCQSCVDAKLQSTPSPSPSKSPSPTESPEQCLQKRQSGEQVVLPSRPFPRTSPR) are disordered.

Its function is as follows. Involved in osmoadaptation. This is an uncharacterized protein from Emericella nidulans (strain FGSC A4 / ATCC 38163 / CBS 112.46 / NRRL 194 / M139) (Aspergillus nidulans).